A 718-amino-acid chain; its full sequence is Probable trehalose-phosphatase (718 aa).

The interval Leu449–Lys470 is disordered. Residues Val459–Lys470 show a composition bias toward basic residues.

It in the N-terminal section; belongs to the glycosyltransferase 20 family. In the C-terminal section; belongs to the trehalose phosphatase family.

It catalyses the reaction alpha,alpha-trehalose 6-phosphate + H2O = alpha,alpha-trehalose + phosphate. In Encephalitozoon cuniculi (strain GB-M1) (Microsporidian parasite), this protein is Probable trehalose-phosphatase.